The primary structure comprises 239 residues: Ribonuclease PH (239 aa).

Residues Arg86 and 124 to 126 (GTR) contribute to the phosphate site.

The protein belongs to the RNase PH family. Homohexameric ring arranged as a trimer of dimers.

It carries out the reaction tRNA(n+1) + phosphate = tRNA(n) + a ribonucleoside 5'-diphosphate. Its function is as follows. Phosphorolytic 3'-5' exoribonuclease that plays an important role in tRNA 3'-end maturation. Removes nucleotide residues following the 3'-CCA terminus of tRNAs; can also add nucleotides to the ends of RNA molecules by using nucleoside diphosphates as substrates, but this may not be physiologically important. Probably plays a role in initiation of 16S rRNA degradation (leading to ribosome degradation) during starvation. The protein is Ribonuclease PH of Rhodopseudomonas palustris (strain BisB18).